A 465-amino-acid chain; its full sequence is MIEYMEYVLRQFERTTSWDRDYSYENITATSDNLLQFEIPDSLNLQISNQSTPNTFNTFELSNRSIINGSLSYLYTDCGQLDKIVQNSLKVPLQQRVDTYQCLRPGRTLGTSFRSQMLLYGRMYWPGSILEAMYCKRLTPQSQLVLKSLLSAAGESSILTLYWQRNAPWGSQDIVFSTNELLLGYRFLHNLSPGRSHEGSPHGQSTLSLGAEFWLGISNLLPGCSTALRYCTHATNTGKPITLTLSLNPLFGHISSSYSVKFSPGTTFCSKYDFNVYSIESNLSFGCEFWKSSAAAHKQATNEEETSIEVATETPVSDPRYCGAVPGARSFDQIRPFAELPSDNQLYHQLMMPNSSNALIDNVNLPFPSPLLRYPPEKSVTDKFAAMIDATQFTSVLKMSSSLRDKNLRLLWEGKYKGFLVSAGAELTTIPLEAPKTINEITAQQVPRPLWLRPAKFGIQIQYST.

It belongs to the MDM10 family. As to quaternary structure, component of the ER-mitochondria encounter structure (ERMES) or MDM complex, composed of MMM1, MDM10, MDM12 and MDM34. Associates with the mitochondrial outer membrane sorting assembly machinery SAM(core) complex.

It is found in the mitochondrion outer membrane. In terms of biological role, component of the ERMES/MDM complex, which serves as a molecular tether to connect the endoplasmic reticulum and mitochondria. Components of this complex are involved in the control of mitochondrial shape and protein biogenesis and may function in phospholipid exchange. MDM10 is involved in the late assembly steps of the general translocase of the mitochondrial outer membrane (TOM complex). Functions in the TOM40-specific route of the assembly of outer membrane beta-barrel proteins, including the association of TOM40 with the receptor TOM22 and small TOM proteins. Can associate with the SAM(core) complex as well as the MDM12-MMM1 complex, both involved in late steps of the major beta-barrel assembly pathway, that is responsible for biogenesis of all outer membrane beta-barrel proteins. May act as a switch that shuttles between both complexes and channels precursor proteins into the TOM40-specific pathway. Plays a role in mitochondrial morphology and in the inheritance of mitochondria. In Eremothecium gossypii (strain ATCC 10895 / CBS 109.51 / FGSC 9923 / NRRL Y-1056) (Yeast), this protein is Mitochondrial distribution and morphology protein 10.